Consider the following 54-residue polypeptide: Large ribosomal subunit protein bL33 (54 aa).

It belongs to the bacterial ribosomal protein bL33 family.

The polypeptide is Large ribosomal subunit protein bL33 (Petrotoga mobilis (strain DSM 10674 / SJ95)).